The chain runs to 864 residues: DNA double-strand break repair Rad50 ATPase (864 aa).

ATP-binding positions include 32-38 (NGAGKSS) and glutamine 131. Coiled-coil stretches lie at residues 176–319 (RELD…EKAI) and 376–413 (DIDK…EKNE). A Zinc-hook domain is found at 380–478 (VNSLEQKVEE…ELNKIEREYR (99 aa)). Residues cysteine 426 and cysteine 429 each contribute to the Zn(2+) site. A coiled-coil region spans residues 440–697 (KIIKEAKSYI…DREKIINAIN (258 aa)).

Belongs to the SMC family. RAD50 subfamily. In terms of assembly, homodimer. Forms a heterotetramer composed of two Mre11 subunits and two Rad50 subunits. It depends on Zn(2+) as a cofactor.

Functionally, part of the Rad50/Mre11 complex, which is involved in the early steps of DNA double-strand break (DSB) repair. The complex may facilitate opening of the processed DNA ends to aid in the recruitment of HerA and NurA. Rad50 controls the balance between DNA end bridging and DNA resection via ATP-dependent structural rearrangements of the Rad50/Mre11 complex. The sequence is that of DNA double-strand break repair Rad50 ATPase from Saccharolobus solfataricus (strain ATCC 35092 / DSM 1617 / JCM 11322 / P2) (Sulfolobus solfataricus).